The sequence spans 66 residues: Large ribosomal subunit protein bL35 (66 aa).

Composition is skewed to basic residues over residues 1 to 16 and 23 to 45; these read MPKQ…RVKR and KRGR…RQLR. The tract at residues 1 to 53 is disordered; sequence MPKQKTHRGLAKRVKRTGGGGLKRGRAFTSHRFHGKTKKQRRQLRKASMVAKG.

It belongs to the bacterial ribosomal protein bL35 family.

This Enterococcus faecalis (strain ATCC 700802 / V583) protein is Large ribosomal subunit protein bL35.